Consider the following 944-residue polypeptide: MVSDRRLLKKFGKIADRIIALEPQMRQLKDEDFLLKTQEFKQMLENGKSLDDILIEVYAVAREAARRVLGLNAYKVQLIGGIILNSGDIAEMRTGEGKTLTGIFPAYLNALTQKGVHIVTVNEYLSRRDSEINGKVFDLLGISVGLNGSSLSKAEKREAYSKDITYTTNAELGFDYLRDNMVSDYSLKVQRKLNYCIIDEADSVLIDEARTPLIISGGTSTRINLYKAANNFALSLKEHDDLDIDLESKQVYLNEQGMKKANEFFSLKNLFAIENTEIFHLIMNALKAQFAFKEGVEYTVRDNEILLIDQFTGRIMHGRSYSDGLQQALQAKENVDIEEETVTLATITYQNFYRLYSKIAGMTGTAKTEEEEFIKIYNTRVIQTPTNKPVIRKDEPDLTFGSKNAALKKLVEDVKETHQKGAPILIGTTSVESSEQIARYLKKANLKFETINAKNHDREAEIVAKAGEIGAITLATNMAGRGTDIKLAKGVSELGGLRVFGVERNEARRIDNQLRGRSGRQGDPGLSRFYISMDDDLMMRFTAPKTRQRFKALGDDYIKSKMFTRAVTNAQKKLEGMNFDQRKNVLDYDNILAQQREIIYAQRDDILEANDLSIVIEKMQITAAYELIEKHSTLVHGEKTINKKELLEVIDGVLVPKNKFRIDDFNNKEKMDLAVEIAEAMMQLYKARISDIPEDVVIGMERKIILDAFDKYWTKHLDIAGKLKSGIYLQQYAQNNPLAIYVEQATDLFNKMKINIANDVVENLSNVILKVVEDEEKREERIEVTDKDIEEILLETGLETSDINNKAINKRFDELEEKFKDDKQKLKRLRIQRDVMLGLVLELERRAEMIVSPENDQLAITQLIKELQNDIDIASITVEQIHQNFNNMVEKINDPEKLKHLVIAKDVLLQLVARMDDIKEQEKQTKKKKKKKPHDDETTKVKIG.

Residues glutamine 77, 95-99 (GEGKT), and aspartate 484 each bind ATP. The disordered stretch occupies residues 920–944 (EQEKQTKKKKKKKPHDDETTKVKIG). Positions 933 to 944 (PHDDETTKVKIG) are enriched in basic and acidic residues.

It belongs to the SecA family. As to quaternary structure, monomer and homodimer. Part of the essential Sec protein translocation apparatus which comprises SecA, SecYEG and auxiliary proteins SecDF. Other proteins may also be involved.

It localises to the cell membrane. Its subcellular location is the cytoplasm. The catalysed reaction is ATP + H2O + cellular proteinSide 1 = ADP + phosphate + cellular proteinSide 2.. Functionally, part of the Sec protein translocase complex. Interacts with the SecYEG preprotein conducting channel. Has a central role in coupling the hydrolysis of ATP to the transfer of proteins into and across the cell membrane, serving as an ATP-driven molecular motor driving the stepwise translocation of polypeptide chains across the membrane. The protein is Protein translocase subunit SecA of Mycoplasma capricolum subsp. capricolum (strain California kid / ATCC 27343 / NCTC 10154).